A 397-amino-acid chain; its full sequence is CCA-adding enzyme (397 aa).

2 residues coordinate ATP: Gly-32 and Arg-35. CTP contacts are provided by Gly-32 and Arg-35. Mg(2+) contacts are provided by Asp-45 and Asp-47. Positions 116, 159, 162, 165, and 168 each coordinate ATP. The CTP site is built by Arg-116, Asp-159, Arg-162, Arg-165, and Arg-168.

This sequence belongs to the tRNA nucleotidyltransferase/poly(A) polymerase family. Bacterial CCA-adding enzyme type 3 subfamily. In terms of assembly, homodimer. It depends on Mg(2+) as a cofactor.

It carries out the reaction a tRNA precursor + 2 CTP + ATP = a tRNA with a 3' CCA end + 3 diphosphate. The enzyme catalyses a tRNA with a 3' CCA end + 2 CTP + ATP = a tRNA with a 3' CCACCA end + 3 diphosphate. In terms of biological role, catalyzes the addition and repair of the essential 3'-terminal CCA sequence in tRNAs without using a nucleic acid template. Adds these three nucleotides in the order of C, C, and A to the tRNA nucleotide-73, using CTP and ATP as substrates and producing inorganic pyrophosphate. tRNA 3'-terminal CCA addition is required both for tRNA processing and repair. Also involved in tRNA surveillance by mediating tandem CCA addition to generate a CCACCA at the 3' terminus of unstable tRNAs. While stable tRNAs receive only 3'-terminal CCA, unstable tRNAs are marked with CCACCA and rapidly degraded. The polypeptide is CCA-adding enzyme (Latilactobacillus sakei subsp. sakei (strain 23K) (Lactobacillus sakei subsp. sakei)).